An 84-amino-acid polypeptide reads, in one-letter code: MKLTCVMIVAVLFLTTWTFVTADDSRYGLKNLFPKARHEMKNPEASKLNKRDGCYNAGTFCGIRPGLCCSEFCFLWCITFVDSG.

A signal peptide spans 1-22 (MKLTCVMIVAVLFLTTWTFVTA). Residues 23–49 (DDSRYGLKNLFPKARHEMKNPEASKLN) constitute a propeptide that is removed on maturation. Intrachain disulfides connect Cys54–Cys69, Cys61–Cys73, and Cys68–Cys77. A 4-hydroxyproline modification is found at Pro65. Ser83 is modified (serine amide).

It belongs to the conotoxin O1 superfamily. Expressed by the venom duct.

The protein localises to the secreted. Delta-conotoxins bind to site 6 of voltage-gated sodium channels (Nav) and inhibit the inactivation process. In Conus magus (Magical cone), this protein is Delta-conotoxin-like MVIA.